The sequence spans 147 residues: Hemoglobin subunit epsilon (147 aa).

Residues 3 to 147 form the Globin domain; it reads HFTAEEKAAI…VAIALGHKYH (145 aa). Phosphoserine occurs at positions 14 and 51. 2 residues coordinate heme b: histidine 64 and histidine 93.

This sequence belongs to the globin family. As to quaternary structure, heterotetramer of two alpha chains and two epsilon chains in early embryonic hemoglobin Gower-2; two zeta chains and two epsilon chains in early embryonic hemoglobin Gower-1. As to expression, red blood cells.

Functionally, the epsilon chain is a beta-type chain of early mammalian embryonic hemoglobin. The chain is Hemoglobin subunit epsilon (HBE1) from Lagothrix lagotricha (Brown woolly monkey).